A 492-amino-acid polypeptide reads, in one-letter code: Fumarate hydratase 1, mitochondrial (492 aa).

Residues 1 to 28 (MSIYVASRRLSGGTTVTALRYATSLRSY) constitute a mitochondrion transit peptide. Residues 127–129 (SGT), 157–160 (HPND), 167–169 (SSN), and T215 each bind substrate. H216 functions as the Proton donor/acceptor in the catalytic mechanism. S346 is a catalytic residue. Residues S347 and 352-354 (KVN) each bind substrate.

This sequence belongs to the class-II fumarase/aspartase family. Fumarase subfamily. As to quaternary structure, homotetramer.

The protein localises to the mitochondrion. The catalysed reaction is (S)-malate = fumarate + H2O. The protein operates within carbohydrate metabolism; tricarboxylic acid cycle; (S)-malate from fumarate: step 1/1. With respect to regulation, fumarate hydratase activity (fumarate to L-malate) is strongly inhibited by phosphoenolpyruvate, citrate, oxaloacetate, ATP and ADP. Malate dehydratase activity (malate to fumarate) is activated by oxaloacetate, pyruvate, Asn and Gln. Malate dehydratase activity (malate to fumarate) is inhibited by citrate, succinate, ADP, ATP, glucose-6P and phosphoenolpyruvate. Functionally, catalyzes the reversible stereospecific interconversion of fumarate to L-malate. Catalyzes the hydration of fumarate to L-malate in the tricarboxylic acid (TCA) cycle to facilitate a transition step in the production of energy in the form of NADH. The protein is Fumarate hydratase 1, mitochondrial of Arabidopsis thaliana (Mouse-ear cress).